Here is a 99-residue protein sequence, read N- to C-terminus: UPF0235 protein Cag_0319 (99 aa).

This sequence belongs to the UPF0235 family.

This Chlorobium chlorochromatii (strain CaD3) protein is UPF0235 protein Cag_0319.